Here is a 342-residue protein sequence, read N- to C-terminus: Biotin synthase (342 aa).

One can recognise a Radical SAM core domain in the interval 63-290 (NTVQLSTLLS…GAMVRLSAGR (228 aa)). Residues Cys78, Cys82, and Cys85 each contribute to the [4Fe-4S] cluster site. Residues Cys122, Cys153, Cys213, and Arg285 each contribute to the [2Fe-2S] cluster site.

The protein belongs to the radical SAM superfamily. Biotin synthase family. Homodimer. It depends on [4Fe-4S] cluster as a cofactor. [2Fe-2S] cluster is required as a cofactor.

It catalyses the reaction (4R,5S)-dethiobiotin + (sulfur carrier)-SH + 2 reduced [2Fe-2S]-[ferredoxin] + 2 S-adenosyl-L-methionine = (sulfur carrier)-H + biotin + 2 5'-deoxyadenosine + 2 L-methionine + 2 oxidized [2Fe-2S]-[ferredoxin]. It functions in the pathway cofactor biosynthesis; biotin biosynthesis; biotin from 7,8-diaminononanoate: step 2/2. Its function is as follows. Catalyzes the conversion of dethiobiotin (DTB) to biotin by the insertion of a sulfur atom into dethiobiotin via a radical-based mechanism. The sequence is that of Biotin synthase from Cupriavidus pinatubonensis (strain JMP 134 / LMG 1197) (Cupriavidus necator (strain JMP 134)).